A 675-amino-acid polypeptide reads, in one-letter code: Potassium-transporting ATPase ATP-binding subunit (675 aa).

4 helical membrane-spanning segments follow: residues 34-54 (IMFV…FPDI), 65-85 (LITI…SEAF), 216-236 (IALF…IVTL), and 245-265 (LILP…TTIG). Aspartate 304 serves as the catalytic 4-aspartylphosphate intermediate. Residues aspartate 341, glutamate 345, 372 to 379 (FTAETRMS), and lysine 390 contribute to the ATP site. Residues aspartate 513 and aspartate 517 each coordinate Mg(2+). Transmembrane regions (helical) follow at residues 569 to 591 (ALTT…ALMM), 611 to 631 (AIIS…PIAM), and 644 to 664 (IFIN…FLGI).

This sequence belongs to the cation transport ATPase (P-type) (TC 3.A.3) family. Type IA subfamily. The system is composed of three essential subunits: KdpA, KdpB and KdpC.

The protein resides in the cell membrane. The catalysed reaction is K(+)(out) + ATP + H2O = K(+)(in) + ADP + phosphate + H(+). Its function is as follows. Part of the high-affinity ATP-driven potassium transport (or Kdp) system, which catalyzes the hydrolysis of ATP coupled with the electrogenic transport of potassium into the cytoplasm. This subunit is responsible for energy coupling to the transport system and for the release of the potassium ions to the cytoplasm. This is Potassium-transporting ATPase ATP-binding subunit from Staphylococcus aureus (strain MSSA476).